The sequence spans 232 residues: Sugar fermentation stimulation protein homolog (232 aa).

The protein belongs to the SfsA family.

This Brucella anthropi (strain ATCC 49188 / DSM 6882 / CCUG 24695 / JCM 21032 / LMG 3331 / NBRC 15819 / NCTC 12168 / Alc 37) (Ochrobactrum anthropi) protein is Sugar fermentation stimulation protein homolog.